The following is a 149-amino-acid chain: Protein-export protein SecB (149 aa).

Belongs to the SecB family. In terms of assembly, homotetramer, a dimer of dimers. One homotetramer interacts with 1 SecA dimer.

It is found in the cytoplasm. In terms of biological role, one of the proteins required for the normal export of preproteins out of the cell cytoplasm. It is a molecular chaperone that binds to a subset of precursor proteins, maintaining them in a translocation-competent state. It also specifically binds to its receptor SecA. This chain is Protein-export protein SecB, found in Acidithiobacillus ferrooxidans (strain ATCC 23270 / DSM 14882 / CIP 104768 / NCIMB 8455) (Ferrobacillus ferrooxidans (strain ATCC 23270)).